The chain runs to 448 residues: MEFNNSVSTIYWSLLERKFSIYVLTFLNRLKCILSNPFSISFSNNKYPSFFNANKTFLKRDSCNLFPNQSNIMFFLVVLSKRLCPNYFNNTGEKKNRGDNINDSSGNRFIDESYVSARKSMSKESNKIKQMNRKLAWIEATLNDLDIWRHSYSVFSSSTKMENNLEQQFSVLESKDTPITMMAYESISLVPRSITRTLSRFKTELMGDSNSLILNEFRLAKYQALASIQYIGCLLFILSIISMLSKTMFLKSWITNWWNTSQSHIFLNLFQEERALKELQEMEELLWLDRVMADYVKDQSQDLDIEIYEETIQLVTIYNEDSIQIILHLLTDIISIVTLIVLFIIGRKRLAVLNSWIQELFYSLSDTMKAFSILLLTDLCIGFHSPHGWEIVIGSFLEHLGFSHNKHIISCFVSTFPVILDTVFKYWIFRHLNRISPSIVATYHTMNE.

4 helical membrane passes run 224–244 (ALAS…ISML), 325–345 (IILH…LFII), 373–393 (ILLL…EIVI), and 408–428 (IISC…KYWI).

Belongs to the CemA family.

It localises to the plastid. The protein resides in the chloroplast inner membrane. The enzyme catalyses K(+)(in) + H(+)(out) = K(+)(out) + H(+)(in). Functionally, contributes to K(+)/H(+) antiport activity by supporting proton efflux to control proton extrusion and homeostasis in chloroplasts in a light-dependent manner to modulate photosynthesis. Prevents excessive induction of non-photochemical quenching (NPQ) under continuous-light conditions. Indirectly promotes efficient inorganic carbon uptake into chloroplasts. The polypeptide is Potassium/proton antiporter CemA (Angiopteris evecta (Mule's foot fern)).